Consider the following 244-residue polypeptide: Probable transcriptional regulatory protein DNO_1179 (244 aa).

This sequence belongs to the TACO1 family.

The protein resides in the cytoplasm. The polypeptide is Probable transcriptional regulatory protein DNO_1179 (Dichelobacter nodosus (strain VCS1703A)).